The chain runs to 249 residues: MVKELLTFEEVSFAYSSSSPVIERLSFTVFENEIVAILAKSGSGKSTLFRLITRLESPDQGTIVCHAQGKIGYMPQQDLLLPWLTILENVSLPLEIQGKDKKEAKIIAASFFNRFGLVGTESLYPDALSGGMRQRAAFLRATLTSETLLLLDEPFASLDSLTKTSMHHWLVSMWEKEKRTLLLVTHDIEEALLLSDRLFIFTNQPLHGFTEVQVPPDLRRKMETTEKMEQQRSSLKKDIRALLIEESLR.

In terms of domain architecture, ABC transporter spans 6–228; sequence LTFEEVSFAY…RRKMETTEKM (223 aa). Residue 39–46 participates in ATP binding; it reads AKSGSGKS.

Belongs to the ABC transporter superfamily. As to quaternary structure, the complex is likely composed of an ATP-binding protein (ThiZ), a transmembrane protein (ThiX) and a solute-binding protein (ThiY).

It is found in the cell membrane. It functions in the pathway cofactor biosynthesis; thiamine diphosphate biosynthesis. In terms of biological role, participates in a thiamine pyrimidine salvage pathway as part of the ABC transporter complex ThiXYZ involved in the import of thiamine degradation products such as the formylaminopyrimidine N-formyl-4-amino-5-aminomethyl-2-methylpyrimidine (FAMP). Is likely responsible for energy coupling to the transport system. This chain is Formylaminopyrimidine import ATP-binding protein ThiZ, found in Halalkalibacterium halodurans (strain ATCC BAA-125 / DSM 18197 / FERM 7344 / JCM 9153 / C-125) (Bacillus halodurans).